Reading from the N-terminus, the 462-residue chain is MREIVTLQIGGAGNAIGDSFWHVISHEHGVDYASGRFGGTSPLQLERINVFFNATASKRFYARTILIDTEASTIQRLNASSQLYRPENFVAGSESAGNNFARGYHTDGAAILDQVLENTRREVESVDSLQGFQLLHSIGGGTGSGLTSLIMEALVEQYPDNLLCNYVTIPSPNMSQVVVEPYNALLSTPALVNNSHLTFCLDNEALFQICNRNLKLKMSGYEHINHIVALTMSGITTCLRFPGQLNAGLRKIYVNMVPFPRLHFLIPGFAPLVTCKQQQFSKGTVSELVQQIFYSNNLLCAIDLRKGKLLTAAGIFRGRMSPREVDQLMTGVRNKNINNFVDWIPNNIKTAICDIPPRGLKMSATFIGNTTAIQTLFQRLLDASMSMLRRKAHLHWYTGEGMEEQEFQDAQQELQAIIDDYRSSAEGEDSGGGGGGGGGRSGSAESGEEEATPEAHCQYCTE.

Positions 70, 137, 141, 142, 143, 203, and 225 each coordinate GTP. Position 70 (Glu70) interacts with Mg(2+). A disordered region spans residues 420-462 (DYRSSAEGEDSGGGGGGGGGRSGSAESGEEEATPEAHCQYCTE). Gly residues predominate over residues 430–441 (SGGGGGGGGGRS).

This sequence belongs to the tubulin family. Dimer of alpha and beta chains. A typical microtubule is a hollow water-filled tube with an outer diameter of 25 nm and an inner diameter of 15 nM. Alpha-beta heterodimers associate head-to-tail to form protofilaments running lengthwise along the microtubule wall with the beta-tubulin subunit facing the microtubule plus end conferring a structural polarity. Microtubules usually have 13 protofilaments but different protofilament numbers can be found in some organisms and specialized cells. The cofactor is Mg(2+).

It localises to the cytoplasm. It is found in the cytoskeleton. In terms of biological role, tubulin is the major constituent of microtubules, a cylinder consisting of laterally associated linear protofilaments composed of alpha- and beta-tubulin heterodimers. Microtubules grow by the addition of GTP-tubulin dimers to the microtubule end, where a stabilizing cap forms. Below the cap, tubulin dimers are in GDP-bound state, owing to GTPase activity of alpha-tubulin. This chain is beta-Tubulin at 65B, found in Drosophila melanogaster (Fruit fly).